The following is a 680-amino-acid chain: ATPase family AAA domain-containing protein FIGL1 (680 aa).

Disordered stretches follow at residues 214-234, 250-275, and 288-352; these read YGNS…NQDR, FGTK…GAPN, and VRQK…GGKT. The segment covering 295–308 has biased composition (polar residues); the sequence is TESPSSCLSPQSDK. Positions 313 to 323 are enriched in gly residues; sequence RGYGSRSGGLR. Residues 336 to 346 show a composition bias toward polar residues; sequence TNGNNVGNLTS. ATP contacts are provided by residues Ala-406 and 446 to 451; that span reads GTGKTM.

This sequence belongs to the AAA ATPase family. Mg(2+) serves as cofactor.

The protein localises to the nucleus. The catalysed reaction is ATP + H2O = ADP + phosphate + H(+). Its function is as follows. Involved in DNA double-strand break (DBS) repair via homologous recombination (HR). Limits class II meiotic crossover (CO) formation by regulating the invasion step of meiotic HR. May counteract DMC1 and RAD51-mediated inter-homolog strand invasion to limit CO formation. Functions independently of FANCM. The protein is ATPase family AAA domain-containing protein FIGL1 of Arabidopsis thaliana (Mouse-ear cress).